Consider the following 488-residue polypeptide: MFLWLKCFCTLIIVTIAKNSSAKIPHCKYDETINISHFKRLNDAYIYEHFEIPANLTGEFDYKELMDGSKVPTEFPNLRGCICKVRPCIRICCARKNILSNGECSDGVKNEIKLTMLDLTMQDILLTDPTLAELNMIPQYNSTELLILREQFQPCDEIVSLKRDEYTILKDGSILLHTSAEILSNDQYCLYPEIYSDFPETIRIINRRCYRNVMPGIAQLSVISVVGFILTLAVYLSVEKLRNLLGKCLICSLFSMFMEYFIWTMDYFRLLQSICSAAGYMKYFFSMSSYLWFSVVSFHLWELFTSLNRHEPQYRFLIYNTFVWCTAAIPTVVIFSMNQMWENDPGKSEWLPLVGYFGCSVKDWNSSSWFYSHIPIVILNSFNVIMFVLTAIYIWKVKKGVKSFAQHDERNTTCLEFNVQTYIQFVRLFLIMGASWLLDQLTRLAEDSHLLLDTIVLNLTVYLNAAFGILIFVLLILKGSTFKMIMER.

Positions 1–17 (MFLWLKCFCTLIIVTIA) are cleaved as a signal peptide. At 18-215 (KNSSAKIPHC…NRRCYRNVMP (198 aa)) the chain is on the extracellular side. N-linked (GlcNAc...) asparagine glycosylation is found at N19, N34, and N55. Intrachain disulfides connect C27–C81, C83–C88, C92–C189, C93–C104, and C155–C209. An N-linked (GlcNAc...) asparagine glycan is attached at N141. A helical transmembrane segment spans residues 216-236 (GIAQLSVISVVGFILTLAVYL). At 237-247 (SVEKLRNLLGK) the chain is on the cytoplasmic side. The helical transmembrane segment at 248 to 268 (CLICSLFSMFMEYFIWTMDYF) threads the bilayer. The Extracellular portion of the chain corresponds to 269–283 (RLLQSICSAAGYMKY). A helical membrane pass occupies residues 284 to 304 (FFSMSSYLWFSVVSFHLWELF). The Cytoplasmic segment spans residues 305–315 (TSLNRHEPQYR). The chain crosses the membrane as a helical span at residues 316–336 (FLIYNTFVWCTAAIPTVVIFS). At 337 to 373 (MNQMWENDPGKSEWLPLVGYFGCSVKDWNSSSWFYSH) the chain is on the extracellular side. A glycan (N-linked (GlcNAc...) asparagine) is linked at N365. Residues 374 to 394 (IPIVILNSFNVIMFVLTAIYI) traverse the membrane as a helical segment. At 395 to 416 (WKVKKGVKSFAQHDERNTTCLE) the chain is on the cytoplasmic side. The chain crosses the membrane as a helical span at residues 417–437 (FNVQTYIQFVRLFLIMGASWL). Residues 438 to 454 (LDQLTRLAEDSHLLLDT) are Extracellular-facing. The chain crosses the membrane as a helical span at residues 455-475 (IVLNLTVYLNAAFGILIFVLL). Residues 476–488 (ILKGSTFKMIMER) lie on the Cytoplasmic side of the membrane.

It belongs to the G-protein coupled receptor 2 family. Mth subfamily.

It localises to the cell membrane. This chain is Probable G-protein coupled receptor Mth-like 12 (mthl12), found in Drosophila melanogaster (Fruit fly).